A 364-amino-acid chain; its full sequence is Protein trichome birefringence-like 40 (364 aa).

The chain crosses the membrane as a helical; Signal-anchor for type II membrane protein span at residues 9 to 25 (LASLSLILFSSFPGLLA). Residues 118-120 (GDS) carry the GDS motif motif. The DCXHWCLPGXXDXWN motif motif lies at 341–355 (DCSHWCLPGLPDTWN).

The protein belongs to the PC-esterase family. TBL subfamily.

Its subcellular location is the membrane. In terms of biological role, may act as a bridging protein that binds pectin and other cell wall polysaccharides. Probably involved in maintaining esterification of pectins. May be involved in the specific O-acetylation of cell wall polymers. The sequence is that of Protein trichome birefringence-like 40 (TBL40) from Arabidopsis thaliana (Mouse-ear cress).